The primary structure comprises 364 residues: Putative F-box/kelch-repeat protein At1g12170 (364 aa).

Positions 1-50 constitute an F-box domain; that stretch reads MMHVILPWELVEEILYRVPPLSLTRFKIVCKQWNTLFKSKSFVNNHLVRV. Kelch repeat units follow at residues 156-205 and 328-364; these read SIYN…LNGN and CVYI…IPVP.

This is Putative F-box/kelch-repeat protein At1g12170 from Arabidopsis thaliana (Mouse-ear cress).